Here is a 275-residue protein sequence, read N- to C-terminus: Formamidopyrimidine-DNA glycosylase (275 aa).

The Schiff-base intermediate with DNA role is filled by P2. Catalysis depends on E3, which acts as the Proton donor. Catalysis depends on K59, which acts as the Proton donor; for beta-elimination activity. Residues H92, R111, and K155 each coordinate DNA. The FPG-type zinc finger occupies 240–274; that stretch reads YVYGQTGEPCRRCGHEIEKMKLGGRGTHYCPHCQQ. Catalysis depends on R264, which acts as the Proton donor; for delta-elimination activity.

This sequence belongs to the FPG family. As to quaternary structure, monomer. It depends on Zn(2+) as a cofactor.

It carries out the reaction Hydrolysis of DNA containing ring-opened 7-methylguanine residues, releasing 2,6-diamino-4-hydroxy-5-(N-methyl)formamidopyrimidine.. It catalyses the reaction 2'-deoxyribonucleotide-(2'-deoxyribose 5'-phosphate)-2'-deoxyribonucleotide-DNA = a 3'-end 2'-deoxyribonucleotide-(2,3-dehydro-2,3-deoxyribose 5'-phosphate)-DNA + a 5'-end 5'-phospho-2'-deoxyribonucleoside-DNA + H(+). Involved in base excision repair of DNA damaged by oxidation or by mutagenic agents. Acts as a DNA glycosylase that recognizes and removes damaged bases. Has a preference for oxidized purines, such as 7,8-dihydro-8-oxoguanine (8-oxoG). Has AP (apurinic/apyrimidinic) lyase activity and introduces nicks in the DNA strand. Cleaves the DNA backbone by beta-delta elimination to generate a single-strand break at the site of the removed base with both 3'- and 5'-phosphates. The chain is Formamidopyrimidine-DNA glycosylase from Exiguobacterium sp. (strain ATCC BAA-1283 / AT1b).